The chain runs to 554 residues: Glucose-6-phosphate isomerase (554 aa).

The Proton donor role is filled by Glu-359. Catalysis depends on residues His-390 and Lys-518.

This sequence belongs to the GPI family.

It localises to the cytoplasm. The catalysed reaction is alpha-D-glucose 6-phosphate = beta-D-fructose 6-phosphate. The protein operates within carbohydrate biosynthesis; gluconeogenesis. It participates in carbohydrate degradation; glycolysis; D-glyceraldehyde 3-phosphate and glycerone phosphate from D-glucose: step 2/4. Catalyzes the reversible isomerization of glucose-6-phosphate to fructose-6-phosphate. This Pseudomonas syringae pv. tomato (strain ATCC BAA-871 / DC3000) protein is Glucose-6-phosphate isomerase.